A 163-amino-acid chain; its full sequence is Peptidyl-prolyl cis-trans isomerase NIMA-interacting 1 (163 aa).

Residues 5–39 form the WW domain; sequence EKLPPGWEKRMSRSSGRVYYFNHITNASQWERPSG. The tract at residues 33 to 54 is disordered; the sequence is QWERPSGNSSSGGKNGQGEPAR. Serine 43 is subject to Phosphoserine. Lysine 46 is modified (N6-acetyllysine). The 112-residue stretch at 52–163 folds into the PpiC domain; sequence PARVRCSHLL…SGIHIILRTE (112 aa). Phosphoserine; by DAPK1 is present on serine 71. Serine 108 is subject to Phosphoserine.

As to quaternary structure, interacts with STIL. Interacts with KIF20B. Interacts with NEK6. Interacts (via WW domain) with PRKX. Interacts with BTK. Interacts (via PpiC domain) with DAPK1. Interacts with the phosphorylated form of RAF1. Interacts (via WW domain) with ATCAY; upon NGF stimulation. Interacts with PML (isoform PML-4). Interacts with BCL6. Interacts with FBXW7, disrupting FBXW7 dimerization and promoting FBXW7 autoubiquitination and degradation. Directly interacts with RBBP8/CtIP; this interaction depends upon RBBP8 phosphorylation. Interacts (via WW domain) with IRAK3/IRAK-M (when phosphorylated at 'Ser-110') in response to IL33-mediated (but not TLR4 ligand LPS) dendritic cell stimulation. Interacts with PGK1 (when phosphorylated at 'Ser-203'); the interaction is direct, occurs under hypoxic conditions, and targets PGK1 to the mitochondrion by promoting interactions with the TOM complex. Phosphorylation at Ser-71 by DAPK1 results in inhibition of its catalytic activity, nuclear localization, and its ability to induce centrosome amplification, chromosome instability and cell transformation. Ser-71 is dephosphorylated upon IL33-stimulation of dendritic cells. Expressed in immune cells in the lung (at protein level). The phosphorylated form at Ser-71 is expressed in normal breast tissue cells but not in breast cancer cells.

The protein resides in the nucleus. It is found in the nucleus speckle. It localises to the cytoplasm. The catalysed reaction is [protein]-peptidylproline (omega=180) = [protein]-peptidylproline (omega=0). Functionally, peptidyl-prolyl cis/trans isomerase (PPIase) that binds to and isomerizes specific phosphorylated Ser/Thr-Pro (pSer/Thr-Pro) motifs. By inducing conformational changes in a subset of phosphorylated proteins, acts as a molecular switch in multiple cellular processes. Displays a preference for acidic residues located N-terminally to the proline bond to be isomerized. Regulates mitosis presumably by interacting with NIMA and attenuating its mitosis-promoting activity. Down-regulates kinase activity of BTK. Can transactivate multiple oncogenes and induce centrosome amplification, chromosome instability and cell transformation. Required for the efficient dephosphorylation and recycling of RAF1 after mitogen activation. Binds and targets PML and BCL6 for degradation in a phosphorylation-dependent manner. Acts as a regulator of JNK cascade by binding to phosphorylated FBXW7, disrupting FBXW7 dimerization and promoting FBXW7 autoubiquitination and degradation: degradation of FBXW7 leads to subsequent stabilization of JUN. May facilitate the ubiquitination and proteasomal degradation of RBBP8/CtIP through CUL3/KLHL15 E3 ubiquitin-protein ligase complex, hence favors DNA double-strand repair through error-prone non-homologous end joining (NHEJ) over error-free, RBBP8-mediated homologous recombination (HR). Upon IL33-induced lung inflammation, catalyzes cis-trans isomerization of phosphorylated IRAK3/IRAK-M, inducing IRAK3 stabilization, nuclear translocation and expression of pro-inflammatory genes in dendritic cells. Catalyzes cis-trans isomerization of phosphorylated phosphoglycerate kinase PGK1 under hypoxic conditions to promote its binding to the TOM complex and targeting to the mitochondrion. The chain is Peptidyl-prolyl cis-trans isomerase NIMA-interacting 1 (PIN1) from Homo sapiens (Human).